We begin with the raw amino-acid sequence, 541 residues long: Chaperonin GroEL (541 aa).

ATP contacts are provided by residues 29 to 32 (TLGP), 86 to 90 (DGTTT), Gly413, and Asp495.

The protein belongs to the chaperonin (HSP60) family. In terms of assembly, forms a cylinder of 14 subunits composed of two heptameric rings stacked back-to-back. Interacts with the co-chaperonin GroES.

Its subcellular location is the cytoplasm. The enzyme catalyses ATP + H2O + a folded polypeptide = ADP + phosphate + an unfolded polypeptide.. Its function is as follows. Together with its co-chaperonin GroES, plays an essential role in assisting protein folding. The GroEL-GroES system forms a nano-cage that allows encapsulation of the non-native substrate proteins and provides a physical environment optimized to promote and accelerate protein folding. The protein is Chaperonin GroEL of Thermoanaerobacter pseudethanolicus (strain ATCC 33223 / 39E) (Clostridium thermohydrosulfuricum).